A 444-amino-acid polypeptide reads, in one-letter code: Glycine receptor subunit alphaZ1 (444 aa).

The N-terminal stretch at 1–24 (MFALGIYLWETIVFFSLAASQQAA) is a signal peptide. Residues 25 to 246 (ARKAASPMPP…RFHLERQMGY (222 aa)) lie on the Extracellular side of the membrane. Asparagine 62 carries N-linked (GlcNAc...) asparagine glycosylation. Glycine contacts are provided by arginine 89 and serine 153. Cysteines 162 and 176 form a disulfide. Glutamate 216 and aspartate 218 together coordinate Zn(2+). An intrachain disulfide couples cysteine 222 to cysteine 233. 226–231 (YNTGKF) contributes to the strychnine binding site. Glycine is bound at residue threonine 228. Histidine 239 contributes to the Zn(2+) binding site. The helical transmembrane segment at 247-268 (YLIQMYIPSLLIVILSWVSFWI) threads the bilayer. The Cytoplasmic portion of the chain corresponds to 269-273 (NMDAA). Residues 274–294 (PARVGLGITTVLTMTTQSSGS) form a helical membrane-spanning segment. Residues 295 to 305 (RASLPKVSYVK) lie on the Extracellular side of the membrane. Residues 306–326 (AIDIWMAVCLLFVFSALLEYA) form a helical membrane-spanning segment. Topologically, residues 327 to 412 (AVNFIARQHK…FISRAKRIDT (86 aa)) are cytoplasmic. A helical transmembrane segment spans residues 413–433 (VSRVAFPLVFLIFNIFYWITY). At 434–444 (KIIRSEDIHKQ) the chain is on the extracellular side.

It belongs to the ligand-gated ion channel (TC 1.A.9) family. Glycine receptor (TC 1.A.9.3) subfamily. GLRA1 sub-subfamily. Homopentamer (in vitro). Heteropentamer composed of glra1 and glrb. Both homopentamers and heteropentamers form functional ion channels. Interacts with glrb. Expressed in brain.

It localises to the postsynaptic cell membrane. It is found in the synapse. The protein localises to the perikaryon. The protein resides in the cell projection. Its subcellular location is the dendrite. It localises to the cell membrane. It carries out the reaction chloride(in) = chloride(out). Activated by glycine and taurine. Inhibited by strychnine. Allosterically activated by ivermectin. Inhibited by picrotoxinin. Strychnine binding locks the channel in a closed conformation and prevents channel opening in response to extracellular glycine. Can also be activated by GABA and inhibited by bicuculline, but this requires heterologous expression in human cells. In terms of biological role, subunit of heteromeric glycine-gated chloride channels. Plays an important role in the down-regulation of neuronal excitability. Contributes to the generation of inhibitory postsynaptic currents. Channel activity is potentiated by ethanol. The polypeptide is Glycine receptor subunit alphaZ1 (glra1) (Danio rerio (Zebrafish)).